A 426-amino-acid chain; its full sequence is Serine--tRNA ligase (426 aa).

233–235 is a binding site for L-serine; sequence TSE. 264–266 is an ATP binding site; that stretch reads RSE. E287 is a binding site for L-serine. 351–354 is an ATP binding site; that stretch reads EISS. Residue S387 participates in L-serine binding.

It belongs to the class-II aminoacyl-tRNA synthetase family. Type-1 seryl-tRNA synthetase subfamily. As to quaternary structure, homodimer. The tRNA molecule binds across the dimer.

The protein localises to the cytoplasm. It carries out the reaction tRNA(Ser) + L-serine + ATP = L-seryl-tRNA(Ser) + AMP + diphosphate + H(+). The catalysed reaction is tRNA(Sec) + L-serine + ATP = L-seryl-tRNA(Sec) + AMP + diphosphate + H(+). It functions in the pathway aminoacyl-tRNA biosynthesis; selenocysteinyl-tRNA(Sec) biosynthesis; L-seryl-tRNA(Sec) from L-serine and tRNA(Sec): step 1/1. In terms of biological role, catalyzes the attachment of serine to tRNA(Ser). Is also able to aminoacylate tRNA(Sec) with serine, to form the misacylated tRNA L-seryl-tRNA(Sec), which will be further converted into selenocysteinyl-tRNA(Sec). This chain is Serine--tRNA ligase, found in Colwellia psychrerythraea (strain 34H / ATCC BAA-681) (Vibrio psychroerythus).